Consider the following 510-residue polypeptide: MLILLILYFLFLQLHIFDSFIKSIMYDIYIHYAICKFIFLLEIYKLIAMGKRKGQRNIASMKYHLYNKILNRKSFPAFSVMFDAGVESVLPTPLENIQIPLGINTNYGIAYASIISSLLSALNNLAISVFNPNFNSQTFLNLGQSANFGISNGISLLNNYTSLYDNYVQLCNILYQPAVFDETYFDLSVYQPALATEYQNQSCKKIEQYFSSLTTTNVSVNVTTLGTGITNIPNVDNYMYNNIADTGIIDLLNALNINFNQLPDFAKFIIAFIPDLNSIINNGFALDVGWLDRCVLAPETQNGIQLQNGMILQYFADVFGMILDYTPLDFAVLMPEFNPENVTQDDLIAILSADKTVISIFGNLFKMHLYDPSPGGINIAYSSEIENYAVSYQQFLQIQKIVNKKYSNIWYAKMVASATIEIARYPYQQNYSYTSGKRTLSYQDFLNYWKTKWKFYGLTDQDLQYAQQLGEQLQGQAKIENQIKLAQKSAKTKQYKPIFYYKNFQNIAVR.

The first 19 residues, 1-19 (MLILLILYFLFLQLHIFDS), serve as a signal peptide directing secretion. Residues 28-48 (IYIHYAICKFIFLLEIYKLIA) form a helical membrane-spanning segment.

The protein resides in the host membrane. This is an uncharacterized protein from Sulfolobus islandicus rod-shaped virus 1 (SIRV-1).